A 734-amino-acid polypeptide reads, in one-letter code: Photosystem I P700 chlorophyll a apoprotein A2 (734 aa).

Transmembrane regions (helical) follow at residues Ile46–Ala69, Leu135–Gln158, Leu175–Ile199, Met273–Tyr291, Leu330–Tyr353, Ala369–Ile395, Ala417–His439, and Phe517–Val535. Residues Cys559 and Cys568 each contribute to the [4Fe-4S] cluster site. 2 helical membrane-spanning segments follow: residues Ala575–Trp596 and Leu643–Ile665. Positions 654, 662, and 670 each coordinate chlorophyll a. Trp671 serves as a coordination point for phylloquinone. The helical transmembrane segment at Leu707 to Ala727 threads the bilayer.

This sequence belongs to the PsaA/PsaB family. The PsaA/B heterodimer binds the P700 chlorophyll special pair and subsequent electron acceptors. PSI consists of a core antenna complex that captures photons, and an electron transfer chain that converts photonic excitation into a charge separation. The eukaryotic PSI reaction center is composed of at least 11 subunits. The cofactor is P700 is a chlorophyll a/chlorophyll a' dimer, A0 is one or more chlorophyll a, A1 is one or both phylloquinones and FX is a shared 4Fe-4S iron-sulfur center..

It localises to the plastid. The protein resides in the chloroplast thylakoid membrane. It catalyses the reaction reduced [plastocyanin] + hnu + oxidized [2Fe-2S]-[ferredoxin] = oxidized [plastocyanin] + reduced [2Fe-2S]-[ferredoxin]. In terms of biological role, psaA and PsaB bind P700, the primary electron donor of photosystem I (PSI), as well as the electron acceptors A0, A1 and FX. PSI is a plastocyanin-ferredoxin oxidoreductase, converting photonic excitation into a charge separation, which transfers an electron from the donor P700 chlorophyll pair to the spectroscopically characterized acceptors A0, A1, FX, FA and FB in turn. Oxidized P700 is reduced on the lumenal side of the thylakoid membrane by plastocyanin. The chain is Photosystem I P700 chlorophyll a apoprotein A2 from Solanum tuberosum (Potato).